A 294-amino-acid polypeptide reads, in one-letter code: MNRVYNDHHIPVLLNEVVENLIWKPDGVYVDCTVGEGGHTRAIAERVLPYGGRVIGIDVDSEVLQIAEHNLLSYPNVQLFKFSYVELPVLLSLLQVHKVDGLLVDLGVSTYQLKAEGRGFSFNQDEPLDMRMNLENNLTAYHIVNTYPEEKLADIIYNYGEENFSRRIARAIVQNRPIQTTRQLVEVIKRALPYKEVHNRKRHFATKTFQAIRIEVNKEIENISKFLEFAPDYLNSGGRLAIISFHSLEDRIVKHVFKNDKRLKPIGDFISPTTFEVAENPRARSAKLRLAERV.

Residues Gly37–His39, Asp58, Leu93, Asp105, and Gln112 each bind S-adenosyl-L-methionine.

It belongs to the methyltransferase superfamily. RsmH family.

Its subcellular location is the cytoplasm. The catalysed reaction is cytidine(1402) in 16S rRNA + S-adenosyl-L-methionine = N(4)-methylcytidine(1402) in 16S rRNA + S-adenosyl-L-homocysteine + H(+). Its function is as follows. Specifically methylates the N4 position of cytidine in position 1402 (C1402) of 16S rRNA. This is Ribosomal RNA small subunit methyltransferase H from Fervidobacterium nodosum (strain ATCC 35602 / DSM 5306 / Rt17-B1).